A 123-amino-acid chain; its full sequence is Immunoglobulin heavy variable 4-34 (123 aa).

Positions 1-26 (MDLLHKNMKHLWFFLLLVAAPRWVLS) are cleaved as a signal peptide. Positions 26–123 (SQVQLQQWGA…ADTAVYYCAR (98 aa)) are v region. The framework-1 stretch occupies residues 27 to 51 (QVQLQQWGAGLLKPSETLSLTCAVY). One can recognise an Ig-like domain in the interval 27–123 (QVQLQQWGAG…ADTAVYYCAR (97 aa)). A disulfide bridge connects residues cysteine 48 and cysteine 121. The interval 52–59 (GGSFSGYY) is complementarity-determining-1. The tract at residues 60–76 (WSWIRQPPGKGLEWIGE) is framework-2. Residues 77 to 83 (INHSGST) form a complementarity-determining-2 region. Residue asparagine 78 is glycosylated (N-linked (GlcNAc...) asparagine). Residues 84–121 (NYNPSLKSRVTISVDTSKNQFSLKLSSVTAADTAVYYC) are framework-3. The complementarity-determining-3 stretch occupies residues 122–123 (AR).

As to quaternary structure, immunoglobulins are composed of two identical heavy chains and two identical light chains; disulfide-linked.

Its subcellular location is the secreted. The protein localises to the cell membrane. V region of the variable domain of immunoglobulin heavy chains that participates in the antigen recognition. Immunoglobulins, also known as antibodies, are membrane-bound or secreted glycoproteins produced by B lymphocytes. In the recognition phase of humoral immunity, the membrane-bound immunoglobulins serve as receptors which, upon binding of a specific antigen, trigger the clonal expansion and differentiation of B lymphocytes into immunoglobulins-secreting plasma cells. Secreted immunoglobulins mediate the effector phase of humoral immunity, which results in the elimination of bound antigens. The antigen binding site is formed by the variable domain of one heavy chain, together with that of its associated light chain. Thus, each immunoglobulin has two antigen binding sites with remarkable affinity for a particular antigen. The variable domains are assembled by a process called V-(D)-J rearrangement and can then be subjected to somatic hypermutations which, after exposure to antigen and selection, allow affinity maturation for a particular antigen. The chain is Immunoglobulin heavy variable 4-34 from Homo sapiens (Human).